A 172-amino-acid chain; its full sequence is Large ribosomal subunit protein uL10 (172 aa).

Belongs to the universal ribosomal protein uL10 family. Part of the ribosomal stalk of the 50S ribosomal subunit. The N-terminus interacts with L11 and the large rRNA to form the base of the stalk. The C-terminus forms an elongated spine to which L12 dimers bind in a sequential fashion forming a multimeric L10(L12)X complex.

Forms part of the ribosomal stalk, playing a central role in the interaction of the ribosome with GTP-bound translation factors. The chain is Large ribosomal subunit protein uL10 from Caulobacter sp. (strain K31).